We begin with the raw amino-acid sequence, 697 residues long: PAN2-PAN3 deadenylation complex subunit PAN3 (697 aa).

Residues 7-36 (TAKDTLCKNILIYGYCKYENKGCAFSHNRQ) form a C3H1-type zinc finger. Positions 40-67 (QQQQATNTSNNSTSVITPNSANSTASSA) are disordered. 2 consecutive short sequence motifs (PABPC-interacting motif-2 (PAM-2)) follow at residues 69 to 89 (LSSK…VSNL) and 106 to 126 (FKPE…TQRP). Residues 106 to 240 (FKPENGVSEP…SAPTPGSETP (135 aa)) form a disordered region. The segment covering 119 to 153 (DSPTTQRPFTSKRFNVSTPSFTPTNFDFANNSNAD) has biased composition (polar residues). Residues 172-187 (QNQQQQQQQQQQQQKQ) show a composition bias toward low complexity. Over residues 212-224 (GVSQSSPSTNPYF) the composition is skewed to polar residues. A pseudokinase domain region spans residues 308 to 576 (QSLSHSNLPE…DLNEFSQRLT (269 aa)). ATP contacts are provided by residues R361, 416 to 423 (DYYPNSIS), and 470 to 471 (SK). Residues 577–615 (PKMFNIIDSLQNSSDFIEGQLTSELENARLFRLMTKLNY) are a coiled coil. The tract at residues 616 to 697 (LIHDNSNSEN…IDTKFRLMRE (82 aa)) is knob domain.

The protein belongs to the protein kinase superfamily. PAN3 family. Homodimer. Forms a heterotrimer with a catalytic subunit PAN2 to form the poly(A)-nuclease (PAN) deadenylation complex. Interacts (via PAM-2 motif) with poly(A)-binding protein PAB1 (via PABC domain), conferring substrate specificity of the enzyme complex.

The protein localises to the cytoplasm. In terms of biological role, regulatory subunit of the poly(A)-nuclease (PAN) deadenylation complex, one of two cytoplasmic mRNA deadenylases involved in mRNA turnover. PAN specifically shortens poly(A) tails of RNA and the activity is stimulated by poly(A)-binding protein PAB1. PAN deadenylation is followed by rapid degradation of the shortened mRNA tails by the CCR4-NOT complex. Deadenylated mRNAs are then degraded by two alternative mechanisms, namely exosome-mediated 3'-5' exonucleolytic degradation, or deadenylation-dependent mRNA decaping and subsequent 5'-3' exonucleolytic degradation by XRN1. May also be involved in post-transcriptional maturation of mRNA poly(A) tails. PAN3 acts as a positive regulator for PAN activity, recruiting the catalytic subunit PAN2 to mRNA via its interaction with RNA and with PAB1. This Candida albicans (strain SC5314 / ATCC MYA-2876) (Yeast) protein is PAN2-PAN3 deadenylation complex subunit PAN3.